Here is a 107-residue protein sequence, read N- to C-terminus: Ig kappa chain V-VI region TEPC 601/TEPC 191 (107 aa).

Residues 1 to 23 (EIVLTQSPAITAASLGQKVTITC) form a framework-1 region. Residues cysteine 23 and cysteine 87 are joined by a disulfide bond. The complementarity-determining-1 stretch occupies residues 24–33 (SASSSVSYMH). The interval 34-48 (WYQQKSGTSPKPWIY) is framework-2. The tract at residues 49–55 (EISKLAS) is complementarity-determining-2. Residues 56–87 (GVPARFSGSGSGTSYSLTISSMEAEDAAIYYC) are framework-3. The segment at 88–96 (QQWNYPLIT) is complementarity-determining-3. A framework-4 region spans residues 97–106 (FGAGTKLELK).

This is Ig kappa chain V-VI region TEPC 601/TEPC 191 from Mus musculus (Mouse).